The primary structure comprises 869 residues: DNA mismatch repair protein MutS (869 aa).

Residue 602–609 coordinates ATP; it reads GPNMSGKS.

Belongs to the DNA mismatch repair MutS family.

Functionally, this protein is involved in the repair of mismatches in DNA. It is possible that it carries out the mismatch recognition step. This protein has a weak ATPase activity. This chain is DNA mismatch repair protein MutS, found in Staphylococcus carnosus (strain TM300).